We begin with the raw amino-acid sequence, 354 residues long: MRTVHDDELKKILKIMSPGTSLREGLDNILRAKTGGLIVLGDNEEILDLVDGGFNINSEYSPAYIYELAKMDGALVLTSDRKRILYANAQLMPNQSISTFETGTRHRTAQRVAKQTNKIAIAISQRRNIITVYKGDIKYVLRDSAVILSKANQAIQTLEKYVAVLERVTNNLNILEFQDLATLFDVTTAIQRTEMVMRIVEEIEGYIIELGNEGRLISMQLNELVRSIEQDGVLLIRDYCYDKMEYNDVYKEIQELSAEDLLDLDIIAKELGYVGKSLIDTLVSPRGYRISNKVPRIPSNVIENLVGHFGKLKYILEAGNEELDQVEGIGEARARAIKNGLRRIREQVALNKNL.

Residues 6-144 (DDELKKILKI…GDIKYVLRDS (139 aa)) form the DAC domain. Residues G73, L91, and 104 to 108 (TRHRT) contribute to the ATP site.

This sequence belongs to the DisA family. Homooctamer. It depends on Mg(2+) as a cofactor.

It carries out the reaction 2 ATP = 3',3'-c-di-AMP + 2 diphosphate. Its function is as follows. Participates in a DNA-damage check-point that is active prior to asymmetric division when DNA is damaged. DisA forms globular foci that rapidly scan along the chromosomes during sporulation, searching for lesions. When a lesion is present, DisA pauses at the lesion site. This triggers a cellular response that culminates in a temporary block in sporulation initiation. Functionally, also has diadenylate cyclase activity, catalyzing the condensation of 2 ATP molecules into cyclic di-AMP (c-di-AMP). c-di-AMP acts as a signaling molecule that couples DNA integrity with progression of sporulation. The rise in c-di-AMP level generated by DisA while scanning the chromosome, operates as a positive signal that advances sporulation; upon encountering a lesion, the DisA focus arrests at the damaged site and halts c-di-AMP synthesis. This Clostridium perfringens (strain 13 / Type A) protein is DNA integrity scanning protein DisA.